Reading from the N-terminus, the 240-residue chain is Ribonuclease P protein component 3 (240 aa).

The protein belongs to the eukaryotic/archaeal RNase P protein component 3 family. In terms of assembly, consists of a catalytic RNA component and at least 4-5 protein subunits.

The protein localises to the cytoplasm. It catalyses the reaction Endonucleolytic cleavage of RNA, removing 5'-extranucleotides from tRNA precursor.. In terms of biological role, part of ribonuclease P, a protein complex that generates mature tRNA molecules by cleaving their 5'-ends. The chain is Ribonuclease P protein component 3 from Halorubrum lacusprofundi (strain ATCC 49239 / DSM 5036 / JCM 8891 / ACAM 34).